Here is a 353-residue protein sequence, read N- to C-terminus: D-alanine--D-alanine ligase A (353 aa).

Residues 141–346 (KRLVNEAGLS…YPEIINRLVA (206 aa)) enclose the ATP-grasp domain. 169 to 224 (EQALGLPIFIKPARQGSSVGVHKVVTEADYQAAMSDGFIYDDKLLAEEFIQAREVE) is an ATP binding site. Residues aspartate 300, glutamate 313, and asparagine 315 each contribute to the Mg(2+) site.

Belongs to the D-alanine--D-alanine ligase family. The cofactor is Mg(2+). Mn(2+) serves as cofactor.

The protein localises to the cytoplasm. It catalyses the reaction 2 D-alanine + ATP = D-alanyl-D-alanine + ADP + phosphate + H(+). It participates in cell wall biogenesis; peptidoglycan biosynthesis. Cell wall formation. The polypeptide is D-alanine--D-alanine ligase A (Brucella melitensis biotype 1 (strain ATCC 23456 / CCUG 17765 / NCTC 10094 / 16M)).